The following is a 165-amino-acid chain: Choriogonadotropin subunit beta (165 aa).

The signal sequence occupies residues 1–20 (METLQGLLLWLLLSMGGAQA). Intrachain disulfides connect Cys-29–Cys-77, Cys-43–Cys-92, Cys-46–Cys-130, Cys-54–Cys-108, Cys-58–Cys-110, and Cys-113–Cys-120. Asn-33 and Asn-50 each carry an N-linked (GlcNAc...) asparagine glycan. The disordered stretch occupies residues 131–165 (DDPNLQASSSSKDPPPSPPSPSRLLEPAGTPFLPQ). 3 O-linked (GalNAc...) serine glycosylation sites follow: Ser-141, Ser-147, and Ser-152.

This sequence belongs to the glycoprotein hormones subunit beta family. As to quaternary structure, heterodimer of a common alpha chain and a unique beta chain which confers biological specificity to thyrotropin, lutropin, follitropin and gonadotropin. As to expression, placenta.

It localises to the secreted. Stimulates the ovaries to synthesize the steroids that are essential for the maintenance of pregnancy. The chain is Choriogonadotropin subunit beta (CGB) from Papio anubis (Olive baboon).